The sequence spans 155 residues: Arginine repressor (155 aa).

Belongs to the ArgR family.

It localises to the cytoplasm. It participates in amino-acid biosynthesis; L-arginine biosynthesis [regulation]. Regulates arginine biosynthesis genes. The polypeptide is Arginine repressor (Histophilus somni (strain 129Pt) (Haemophilus somnus)).